A 393-amino-acid chain; its full sequence is Pyrimidine monooxygenase RutA (393 aa).

FMN-binding positions include 79-80 (IK), Asn-145, Glu-154, 170-171 (RY), and Ser-220.

Belongs to the NtaA/SnaA/DszA monooxygenase family. RutA subfamily.

The enzyme catalyses uracil + FMNH2 + NADH + O2 = (Z)-3-ureidoacrylate + FMN + NAD(+) + H2O + H(+). It carries out the reaction thymine + FMNH2 + NADH + O2 = (Z)-2-methylureidoacrylate + FMN + NAD(+) + H2O + H(+). In terms of biological role, catalyzes the pyrimidine ring opening between N-3 and C-4 by an unusual flavin hydroperoxide-catalyzed mechanism, adding oxygen atoms in the process to yield ureidoacrylate peracid, that immediately reacts with FMN forming ureidoacrylate and FMN-N(5)-oxide. The FMN-N(5)-oxide reacts spontaneously with NADH to produce FMN. Requires the flavin reductase RutF to regenerate FMN in vivo. This chain is Pyrimidine monooxygenase RutA, found in Escherichia coli O139:H28 (strain E24377A / ETEC).